A 180-amino-acid chain; its full sequence is Oligoribonuclease (180 aa).

One can recognise an Exonuclease domain in the interval 7–170 (LIWIDLEMTG…SDIQDSIDEL (164 aa)). Tyrosine 128 is an active-site residue.

It belongs to the oligoribonuclease family.

The protein resides in the cytoplasm. Functionally, 3'-to-5' exoribonuclease specific for small oligoribonucleotides. This is Oligoribonuclease from Ruthia magnifica subsp. Calyptogena magnifica.